A 217-amino-acid polypeptide reads, in one-letter code: Uracil-DNA glycosylase (217 aa).

The Proton acceptor role is filled by aspartate 62.

This sequence belongs to the uracil-DNA glycosylase (UDG) superfamily. UNG family.

Its subcellular location is the cytoplasm. It carries out the reaction Hydrolyzes single-stranded DNA or mismatched double-stranded DNA and polynucleotides, releasing free uracil.. Functionally, excises uracil residues from the DNA which can arise as a result of misincorporation of dUMP residues by DNA polymerase or due to deamination of cytosine. This chain is Uracil-DNA glycosylase, found in Streptococcus equi subsp. zooepidemicus (strain H70).